Consider the following 132-residue polypeptide: uncharacterized protein (132 aa).

This is an uncharacterized protein from Mycoplasma genitalium (strain ATCC 33530 / DSM 19775 / NCTC 10195 / G37) (Mycoplasmoides genitalium).